Here is a 590-residue protein sequence, read N- to C-terminus: Acetolactate synthase large subunit (590 aa).

Glu61 contacts thiamine diphosphate. FAD-binding positions include Arg163, 271–292, and 314–333; these read HGTA…LGAR and DIDP…IVGD. The tract at residues 405 to 484 is thiamine pyrophosphate binding; it reads QHQMWSAQFL…IKIVIINNRW (80 aa). Residues Asp455 and Asn482 each contribute to the Mg(2+) site.

It belongs to the TPP enzyme family. Dimer of large and small chains. The cofactor is Mg(2+). Requires thiamine diphosphate as cofactor.

It is found in the plastid. Its subcellular location is the chloroplast. It carries out the reaction 2 pyruvate + H(+) = (2S)-2-acetolactate + CO2. It functions in the pathway amino-acid biosynthesis; L-isoleucine biosynthesis; L-isoleucine from 2-oxobutanoate: step 1/4. The protein operates within amino-acid biosynthesis; L-valine biosynthesis; L-valine from pyruvate: step 1/4. This chain is Acetolactate synthase large subunit (ilvB), found in Porphyra purpurea (Red seaweed).